The following is a 183-amino-acid chain: tRNA-splicing endonuclease (183 aa).

Active-site residues include Tyr120, His128, and Lys159.

It belongs to the tRNA-intron endonuclease family. Archaeal short subfamily. In terms of assembly, homotetramer; although the tetramer contains four active sites, only two participate in the cleavage. Therefore, it should be considered as a dimer of dimers.

The catalysed reaction is pretRNA = a 3'-half-tRNA molecule with a 5'-OH end + a 5'-half-tRNA molecule with a 2',3'-cyclic phosphate end + an intron with a 2',3'-cyclic phosphate and a 5'-hydroxyl terminus.. Its function is as follows. Endonuclease that removes tRNA introns. Cleaves pre-tRNA at the 5'- and 3'-splice sites to release the intron. The products are an intron and two tRNA half-molecules bearing 2',3' cyclic phosphate and 5'-OH termini. Recognizes a pseudosymmetric substrate in which 2 bulged loops of 3 bases are separated by a stem of 4 bp. The polypeptide is tRNA-splicing endonuclease (Pyrobaculum arsenaticum (strain DSM 13514 / JCM 11321 / PZ6)).